Here is a 479-residue protein sequence, read N- to C-terminus: Putative F-box protein At1g67390 (479 aa).

One can recognise an F-box domain in the interval 40–88; sequence DDRISKLPDDVLVMILASLSTEDALKTSVLSTRWKNVWKQVPYLHFDLL.

This Arabidopsis thaliana (Mouse-ear cress) protein is Putative F-box protein At1g67390.